The following is a 729-amino-acid chain: Ran-binding protein 9 (729 aa).

The segment covering Met-1–Gln-11 has biased composition (pro residues). The segment at Met-1–Asp-137 is disordered. The span at Leu-27–Gly-49 shows a compositional bias: low complexity. Positions Ser-50–Leu-60 are enriched in gly residues. Residues His-70 to Ala-93 show a composition bias toward pro residues. Low complexity predominate over residues Gly-107–Gly-126. The 188-residue stretch at Leu-147–Phe-334 folds into the B30.2/SPRY domain. In terms of domain architecture, LisH spans Trp-365–Val-397. Residues Leu-401–Arg-407 are interaction with CALB1. The region spanning Ser-403–Val-460 is the CTLH domain. Lys-405 is subject to N6-acetyllysine. The interval Arg-461 to Ser-489 is disordered. Residues Ser-473 to Ser-489 show a composition bias toward low complexity. Phosphoserine occurs at positions 477 and 487. The interaction with FMR1 stretch occupies residues Ala-615–His-729.

Belongs to the RANBP9/10 family. Part of a complex consisting of RANBP9, MKLN1 and GID8. Identified in the CTLH complex that contains GID4, RANBP9 and/or RANBP10, MKLN1, MAEA, RMND5A (or alternatively its paralog RMND5B), GID8, ARMC8, WDR26 and YPEL5. Within this complex, MAEA, RMND5A (or alternatively its paralog RMND5B), GID8, WDR26, and RANBP9 and/or RANBP10 form the catalytic core, while GID4, MKLN1, ARMC8 and YPEL5 have ancillary roles. Interacts with GTP-bound Ran, AR, CDC2L1/p110C, CALB1, S100A7, USP11, MKLN1, SOS1 or SOS2, GID8, and FMR1. Interacts with the Dyrk kinases HIPK2, DYRK1A, and DYRK1B. Interacts with TP73 isoform Alpha but not with TP53. Interacts with the HGF receptor MET and the integrins ITGB1 and ITGB2, but not with ITGAL. Part of a complex consisting of RANBP9, RAN, DYRK1B and COPS5. Directly interacts with RANBP10. Interacts with YPEL5. Interacts with DDX4. Interacts with NGFR. Interacts with TEX19. In terms of processing, phosphorylated in response to stress. Can be phosphorylated by the cleaved p110 form of CDC2L1 (p110C). Ubiquitinated. Polyubiquitination targets the protein for rapid degradation via the ubiquitin system. Can be deubiquitinated by USP11. Ubiquitously expressed, with highest levels in testes, placenta, heart, and muscle, and lowest levels in lung. Within the brain, expressed predominantly by neurons in the gray matter of cortex, the granular layer of cerebellum and the Purkinje cells.

It is found in the cytoplasm. It localises to the nucleus. The protein localises to the cell membrane. May act as scaffolding protein, and as adapter protein to couple membrane receptors to intracellular signaling pathways. Acts as a mediator of cell spreading and actin cytoskeleton rearrangement. Core component of the CTLH E3 ubiquitin-protein ligase complex that selectively accepts ubiquitin from UBE2H and mediates ubiquitination and subsequent proteasomal degradation of the transcription factor HBP1. May be involved in signaling of ITGB2/LFA-1 and other integrins. Enhances HGF-MET signaling by recruiting Sos and activating the Ras pathway. Enhances dihydrotestosterone-induced transactivation activity of AR, as well as dexamethasone-induced transactivation activity of NR3C1, but not affect estrogen-induced transactivation. Stabilizes TP73 isoform Alpha, probably by inhibiting its ubiquitination, and increases its proapoptotic activity. Inhibits the kinase activity of DYRK1A and DYRK1B. Inhibits FMR1 binding to RNA. This Homo sapiens (Human) protein is Ran-binding protein 9 (RANBP9).